Reading from the N-terminus, the 333-residue chain is D-fructose 1,6-bisphosphatase class 2/sedoheptulose 1,7-bisphosphatase (333 aa).

Residues D33, E57, D85, and E88 each coordinate Mn(2+). Substrate is bound by residues E88–T90, Y119, R164–R166, and D186–D188. Residue E213 participates in Mn(2+) binding.

Belongs to the FBPase class 2 family. As to quaternary structure, homotetramer. Mn(2+) serves as cofactor.

The enzyme catalyses beta-D-fructose 1,6-bisphosphate + H2O = beta-D-fructose 6-phosphate + phosphate. The catalysed reaction is D-sedoheptulose 1,7-bisphosphate + H2O = D-sedoheptulose 7-phosphate + phosphate. It participates in carbohydrate biosynthesis; Calvin cycle. Catalyzes the hydrolysis of fructose 1,6-bisphosphate (Fru 1,6-P2) and sedoheptulose 1,7-bisphosphate (Sed 1,7-P2) to fructose 6-phosphate and sedoheptulose 7-phosphate, respectively. This is D-fructose 1,6-bisphosphatase class 2/sedoheptulose 1,7-bisphosphatase from Prochlorococcus marinus (strain MIT 9301).